Reading from the N-terminus, the 1252-residue chain is DNA-directed RNA polymerase subunit beta (1252 aa).

The protein belongs to the RNA polymerase beta chain family. As to quaternary structure, the RNAP catalytic core consists of 2 alpha, 1 beta, 1 beta' and 1 omega subunit. When a sigma factor is associated with the core the holoenzyme is formed, which can initiate transcription.

The enzyme catalyses RNA(n) + a ribonucleoside 5'-triphosphate = RNA(n+1) + diphosphate. Functionally, DNA-dependent RNA polymerase catalyzes the transcription of DNA into RNA using the four ribonucleoside triphosphates as substrates. This is DNA-directed RNA polymerase subunit beta from Chlamydia felis (strain Fe/C-56) (Chlamydophila felis).